We begin with the raw amino-acid sequence, 292 residues long: Phosphoribulokinase 2 (292 aa).

Residue 12-20 (GSSGAGTST) coordinates ATP.

The protein belongs to the phosphoribulokinase family.

It carries out the reaction D-ribulose 5-phosphate + ATP = D-ribulose 1,5-bisphosphate + ADP + H(+). It functions in the pathway carbohydrate biosynthesis; Calvin cycle. The polypeptide is Phosphoribulokinase 2 (prkB) (Cereibacter sphaeroides (Rhodobacter sphaeroides)).